A 304-amino-acid chain; its full sequence is Dihydroorotate dehydrogenase B (NAD(+)), catalytic subunit (304 aa).

FMN contacts are provided by residues serine 22 and 46–47 (KG). Residues lysine 46 and 70–74 (NAIGL) contribute to the substrate site. The FMN site is built by asparagine 100 and asparagine 128. Residue asparagine 128 participates in substrate binding. Cysteine 131 functions as the Nucleophile in the catalytic mechanism. Positions 166 and 192 each coordinate FMN. Residue 193–194 (NT) coordinates substrate. Residues glycine 218, 244-245 (GG), and 266-267 (GT) contribute to the FMN site.

The protein belongs to the dihydroorotate dehydrogenase family. Type 1 subfamily. As to quaternary structure, heterotetramer of 2 PyrK and 2 PyrD type B subunits. It depends on FMN as a cofactor.

The protein localises to the cytoplasm. It catalyses the reaction (S)-dihydroorotate + NAD(+) = orotate + NADH + H(+). It functions in the pathway pyrimidine metabolism; UMP biosynthesis via de novo pathway; orotate from (S)-dihydroorotate (NAD(+) route): step 1/1. Catalyzes the conversion of dihydroorotate to orotate with NAD(+) as electron acceptor. The protein is Dihydroorotate dehydrogenase B (NAD(+)), catalytic subunit (pyrD) of Trichlorobacter lovleyi (strain ATCC BAA-1151 / DSM 17278 / SZ) (Geobacter lovleyi).